Reading from the N-terminus, the 707-residue chain is Ribosomal RNA large subunit methyltransferase K/L (707 aa).

The 112-residue stretch at 44-155 folds into the THUMP domain; sequence VIYNLCLWSR…NDILTVSFDL (112 aa).

Belongs to the methyltransferase superfamily. RlmKL family.

Its subcellular location is the cytoplasm. It catalyses the reaction guanosine(2445) in 23S rRNA + S-adenosyl-L-methionine = N(2)-methylguanosine(2445) in 23S rRNA + S-adenosyl-L-homocysteine + H(+). The enzyme catalyses guanosine(2069) in 23S rRNA + S-adenosyl-L-methionine = N(2)-methylguanosine(2069) in 23S rRNA + S-adenosyl-L-homocysteine + H(+). In terms of biological role, specifically methylates the guanine in position 2445 (m2G2445) and the guanine in position 2069 (m7G2069) of 23S rRNA. The sequence is that of Ribosomal RNA large subunit methyltransferase K/L from Legionella pneumophila (strain Corby).